The primary structure comprises 310 residues: Syntaxin-related protein KNOLLE (310 aa).

Met-1 carries the N-acetylmethionine modification. Residues 1 to 283 (MNDLMTKSFM…AKSHQRNSRK (283 aa)) lie on the Cytoplasmic side of the membrane. The stretch at 94 to 159 (NEIVSGLRKA…FQGLRQKMMS (66 aa)) forms a coiled coil. The region spanning 212-274 (VVEIQDRYDA…ADGANELKTA (63 aa)) is the t-SNARE coiled-coil homology domain. A helical; Anchor for type IV membrane protein membrane pass occupies residues 284-304 (WMCIGIIVLLLIILIVVIPII). Residues 305-310 (TSFSSS) are Vesicular-facing.

The protein belongs to the syntaxin family. Interacts with SNAP33 and/or NPSN11 to form a t-SNARE complex and with KEULE. As to expression, abundant in flowers and developing siliques. A low level expression is seen in the seedlings, roots, and leaves.

It is found in the membrane. Functionally, involved in cytokinesis. Acts as a cell plate-specific syntaxin, required for the fusion of vesicles at the plane of cell division. This Arabidopsis thaliana (Mouse-ear cress) protein is Syntaxin-related protein KNOLLE (KN).